Consider the following 1630-residue polypeptide: Merozoite surface protein 1 (1630 aa).

Residues 1-19 form the signal peptide; it reads MKIIFFLCSFLFFIINTQC. A disordered region spans residues 60–113; sequence TKGASAQSGTSGTSGTSGPSGPSGTSPSSRSNTLPRSNTSSGASPPADASDSDA. Positions 67 to 84 are tripeptide SG(TP) repeat; it reads SGTSGTSGTSGPSGPSGT. Residues 67–88 show a composition bias toward low complexity; the sequence is SGTSGTSGTSGPSGPSGTSPSS. Polar residues predominate over residues 89–98; the sequence is RSNTLPRSNT. N97 is a glycosylation site (N-linked (GlcNAc...) asparagine). Residues 99–108 are compositionally biased toward low complexity; it reads SSGASPPADA. A glycan (N-linked (GlcNAc...) asparagine) is linked at N259. The interval 680-755 is disordered; sequence KKNIKTEGQS…VPTPPAPVNN (76 aa). 2 stretches are compositionally biased toward polar residues: residues 685–695 and 702–713; these read TEGQSDNSEPS and GQATTKPGQQAG. Positions 721 to 732 are enriched in low complexity; it reads VQAQAQEQKQAQ. Residues N755, N759, N774, and N835 are each glycosylated (N-linked (GlcNAc...) asparagine). Residues 884–906 are disordered; sequence SMQPLSLTPQDKPEVSANDDTSH. Residues N911, N955, N1049, N1156, and N1165 are each glycosylated (N-linked (GlcNAc...) asparagine). The tract at residues 993–1107 is required for binding to host erythrocyte cell membrane; that stretch reads QLSFDLYNKY…EESIQTEDNY (115 aa). The segment covering 1190-1203 has biased composition (polar residues); it reads VSESGSDTLEQSQP. Residues 1190–1220 are disordered; that stretch reads VSESGSDTLEQSQPKKPASTHVGAESNTITT. N1436 and N1517 each carry an N-linked (GlcNAc...) asparagine glycan. EGF-like domains are found at residues 1521–1561 and 1562–1610; these read HQCV…VENP and NPTC…FCSS. Intrachain disulfides connect C1523/C1534, C1528/C1544, C1546/C1557, C1565/C1578, C1572/C1592, and C1594/C1608. S1609 carries the GPI-anchor amidated serine lipid modification. Residues 1610–1630 constitute a propeptide, removed in mature form; it reads SSNFLGISFLLILMLILYSFI.

In terms of assembly, forms a complex composed of subunits p83, p30, p38, and p42 which remain non-covalently associated; the complex is formed at the merozoite surface prior to egress from host erythrocytes. Forms a complex composed of processed MSP1 subunits, MSP6 subunit p36 and MSP7; the complex is formed at the merozoite surface prior to egress from host erythrocytes. Within the complex, interacts (via subunit p38) with MSP6 subunit p36 and (via subunits p83, p30 and p38) with MSP7 (via subunit p22). Forms a complex composed of MSP1, MSP6, DBLMSP1 and DBLMSP2. Within the complex, interacts (via subunit p38) with DBLMSP1 and DBLMSP2. Forms a complex composed of MSP1, and rhoptry proteins RhopH3, RAP1 and CLAG9/RhopH3. Within the complex, interacts (via subunits p42 and p19) with RhopH3 (via C-terminus). Forms a complex composed of MSP1, MSP6, MSP7, MSP9 and MSP3; within the complex, MSP6 and MSP9 mediate the binding to the host erythrocyte. Interacts (via subunits p19 and p42) with MSP9; the interaction is direct; MSP1 subunits p19 or p42, and MSP9 form a co-ligand complex that interacts with host SLC4A1/Band 3 protein. May interact with PFD6. Interacts with host spectrin. As to quaternary structure, interacts with host glycophorin GYPA in a sialic acid-independent manner. Interacts with host proinflammatory cytokine S100P; the interaction blocks S100P inflammatory and chemotactic activities. In terms of assembly, interacts with host SLC4A1/Band 3 (via 5ABC region) on the host erythrocyte surface in a sialic acid-independent manner. The p190 precursor is cleaved by SUB1 prior to merozoite egress into 4 subunits p83, p30, p38, and p42 which remain non-covalently associated. SUB1-mediated proteolytic cleavage occurs in an orderly manner; the first cleavage occurs at the p83/p30 site, followed by cleavage at the p30/p38 site, the last cleavage occurs at the p38/p42 site. The order of cleavage is essential for parasite viability. SUB1-mediated processing is essential for merozoite egress. In a second processing step during erythrocyte invasion, p42 is cleaved by SUB2 into p33 and p19; the latter remains attached to the merozoite surface via its GPI-anchor and stays on the surface during the subsequent ring stage.

Its subcellular location is the cell membrane. The protein localises to the secreted. It localises to the vacuole membrane. Functionally, during the asexual blood stage, involved in merozoite egress from host erythrocytes possibly via its interaction with the host cytoskeleton protein spectrin resulting in the destabilization of the host cytoskeleton and thus leading to erythrocyte cell membrane rupture. Involved in the binding to host erythrocytes and is required for host erythrocyte invasion. By binding to host proinflammatory cytokine S100P may interfere with host immune responses. Its function is as follows. Involved in merozoite invasion of host erythrocytes. May play a role in the biogenesis and/or function of the food vacuole during the intraerythrocytic development. This is Merozoite surface protein 1 from Plasmodium falciparum (isolate K1 / Thailand).